The sequence spans 571 residues: MGTLQSWRKAYGALKDSTKVGLVRVNSEYADLDVAIVKATNHVECPPKDRHLRKIFAATSVTRARADVAYCIHALSRRLHKTRNWTVALKTLIVIHRLLREGDPTFREELLNFSQRGRILQLSNFKDDSSPIAWDCSAWVRTYALFLEERLECFRVLKYDTEAERLPKSNPGQDKGYSRTRDLDGEELLEQLPALQQLLYRLIGCRPEGAANHNHVIQYALALVLKESFKVYCAINDGIINLIDKFFEMAKHEAITSLEIYKRAGQQARSLSDFYEACKGLELARNFQFPVLREPPQSFLTTMEEYIKEAPRVVDVPAEPLLLTYRPDDGLTTEDTEPSHEEREMLPSDDVVVVSEETEPSPPPPPSANAQNFIDTDDLWGLNTGAPDTSVIEDQNALALAIVSTDADPPTPHFGQPNNYDPTGWELALVTAPSSDISASTERKLAGGLDTLTLSSLYDDGAYIASQRPVYGAPAPNPFASHDPFASSNGTAPPPQQQAVNNPFGAYQQTYQHQPQPTYQHQSNPPTNNSNPFGDFGEFPVNPVSQQPNTSGYGDFSVNQHNNPFRSTGLI.

Residues 24–161 (RVNSEYADLD…ECFRVLKYDT (138 aa)) enclose the ENTH domain. Disordered stretches follow at residues 325 to 346 (YRPD…REML) and 474 to 571 (PAPN…TGLI). Basic and acidic residues predominate over residues 337–346 (EPSHEEREML). Low complexity predominate over residues 508–522 (QQTYQHQPQPTYQHQ). 2 stretches are compositionally biased toward polar residues: residues 523-532 (SNPPTNNSNP) and 543-571 (PVSQ…TGLI).

The protein localises to the membrane. Its subcellular location is the clathrin-coated pit. It localises to the golgi apparatus. It is found in the cytoplasmic vesicle. The protein resides in the clathrin-coated vesicle. This is Putative clathrin assembly protein At2g01600 from Arabidopsis thaliana (Mouse-ear cress).